The primary structure comprises 1486 residues: Alsin homolog (1486 aa).

RCC1 repeat units lie at residues 147 to 201 (QGVV…MLVA), 256 to 307 (HTQL…ARTL), and 308 to 363 (DGRL…LLNA). 6 MORN repeats span residues 744 to 765 (CGTW…DGSV), 766 to 784 (YCGE…MVIP), 789 to 804 (YVGN…HGVY), 817 to 832 (YEGN…HGVM), 839 to 853 (YVGE…GYGV), and 863 to 884 (YMGM…NRGD). The VPS9 domain occupies 1333–1486 (SRKDEMYRQN…VTSRALQKIP (154 aa)).

As to expression, in the embryo, expressed in a wide range of tissues including the epidermis and the ventral nerve cord.

In terms of biological role, has guanine nucleotide exchange factor (GEF) activity towards Rab5. Promotes the exchange of GDP to GTP, converting inactive GDP-bound Rab5 into its active GTP-bound form. This Drosophila melanogaster (Fruit fly) protein is Alsin homolog.